A 255-amino-acid chain; its full sequence is Phosphate import ATP-binding protein PstB (255 aa).

Residues 9–250 (MYAQGLQFYY…PRNKQTEDYI (242 aa)) form the ABC transporter domain. Position 41-48 (41-48 (GPSGCGKS)) interacts with ATP.

This sequence belongs to the ABC transporter superfamily. Phosphate importer (TC 3.A.1.7) family. In terms of assembly, the complex is composed of two ATP-binding proteins (PstB), two transmembrane proteins (PstC and PstA) and a solute-binding protein (PstS).

It localises to the cell inner membrane. The catalysed reaction is phosphate(out) + ATP + H2O = ADP + 2 phosphate(in) + H(+). Part of the ABC transporter complex PstSACB involved in phosphate import. Responsible for energy coupling to the transport system. The protein is Phosphate import ATP-binding protein PstB of Nitratidesulfovibrio vulgaris (strain ATCC 29579 / DSM 644 / CCUG 34227 / NCIMB 8303 / VKM B-1760 / Hildenborough) (Desulfovibrio vulgaris).